A 184-amino-acid chain; its full sequence is UPF0301 protein Sden_2674 (184 aa).

This sequence belongs to the UPF0301 (AlgH) family.

The sequence is that of UPF0301 protein Sden_2674 from Shewanella denitrificans (strain OS217 / ATCC BAA-1090 / DSM 15013).